Consider the following 29-residue polypeptide: Omega-conotoxin MVIIC (29 aa).

The propeptide occupies 1–2; sequence TR. Intrachain disulfides connect C3-C18, C10-C22, and C17-C28. Position 28 is a cysteine amide (C28).

The protein belongs to the conotoxin O1 superfamily. In terms of processing, not hydroxylated; hydroxylation, on a synthetic hydroxylated MVIIC, has a significant impact on the oxidative folding but not on the biological activity. In terms of tissue distribution, expressed by the venom duct.

It is found in the secreted. In terms of biological role, omega-conotoxins act at presynaptic membranes, they bind and block voltage-gated calcium channels (Cav). This toxin preferentially blocks P/Q-type calcium channels (Cav2.1/CACNA1A) (IC(50)=0.60 nM). Also shows an inhibition on Cav2.2/CACNA1A channels (IC(50)=7.0 nM). This is Omega-conotoxin MVIIC from Conus magus (Magical cone).